Consider the following 147-residue polypeptide: Hemoglobin subunit beta (147 aa).

Val-2 carries the N-acetylvaline modification. Residues His-3–His-147 form the Globin domain. Thr-13 is modified (phosphothreonine). Ser-45 carries the phosphoserine modification. The residue at position 60 (Lys-60) is an N6-acetyllysine. His-64 lines the heme b pocket. Lys-83 is subject to N6-acetyllysine. Position 93 (His-93) interacts with heme b. Residue Cys-94 is modified to S-nitrosocysteine. The residue at position 145 (Lys-145) is an N6-acetyllysine.

The protein belongs to the globin family. In terms of assembly, heterotetramer of two alpha chains and two beta chains. As to expression, red blood cells.

Its function is as follows. Involved in oxygen transport from the lung to the various peripheral tissues. The protein is Hemoglobin subunit beta (HBB) of Ailuropoda melanoleuca (Giant panda).